Consider the following 304-residue polypeptide: Glycine--tRNA ligase alpha subunit (304 aa).

The protein belongs to the class-II aminoacyl-tRNA synthetase family. As to quaternary structure, tetramer of two alpha and two beta subunits.

The protein localises to the cytoplasm. The enzyme catalyses tRNA(Gly) + glycine + ATP = glycyl-tRNA(Gly) + AMP + diphosphate. The sequence is that of Glycine--tRNA ligase alpha subunit from Actinobacillus pleuropneumoniae serotype 3 (strain JL03).